Reading from the N-terminus, the 271-residue chain is N-acetyltransferase ECO1 (271 aa).

A CCHH-type zinc finger spans residues 26–50 (VKCPKCSITYSTNSPSDLVQHKRYH). An N-acetyltransferase domain is found at 109–271 (VMISPKKANE…SGKLLIPCYI (163 aa)).

The protein belongs to the acetyltransferase family. ECO subfamily.

It is found in the nucleus. Its function is as follows. Probable acetyltransferase required for the establishment of sister chromatid cohesion and couple the processes of cohesion and DNA replication to ensure that only sister chromatids become paired together. In contrast to the structural cohesins, the deposition and establishment factors are required only during S phase. Acts by acetylating the cohesin complex component SMC3. The polypeptide is N-acetyltransferase ECO1 (ECO1) (Kluyveromyces lactis (strain ATCC 8585 / CBS 2359 / DSM 70799 / NBRC 1267 / NRRL Y-1140 / WM37) (Yeast)).